Here is a 412-residue protein sequence, read N- to C-terminus: Peptide chain release factor subunit 1 (412 aa).

This sequence belongs to the eukaryotic release factor 1 family. As to quaternary structure, heterodimer of two subunits, one of which binds GTP.

It is found in the cytoplasm. In terms of biological role, directs the termination of nascent peptide synthesis (translation) in response to the termination codons UAA, UAG and UGA. The sequence is that of Peptide chain release factor subunit 1 from Methanobrevibacter smithii (strain ATCC 35061 / DSM 861 / OCM 144 / PS).